Here is a 400-residue protein sequence, read N- to C-terminus: Na(+)/H(+) antiporter NhaA (400 aa).

The next 12 helical transmembrane spans lie at 26–46, 71–91, 107–127, 137–157, 166–186, 189–209, 212–232, 233–253, 273–293, 299–319, 340–360, and 373–393; these read AGGI…NSPL, LIHW…GMEV, IFPA…YWFI, GWAI…ALLS, IFLL…IALF, HGLS…LILL, FKVS…ASVL, KSGV…PLKG, FVIL…GIDV, PLLL…IFGF, IFAV…LASL, and LSRL…YLFL.

Belongs to the NhaA Na(+)/H(+) (TC 2.A.33) antiporter family.

Its subcellular location is the cell inner membrane. The catalysed reaction is Na(+)(in) + 2 H(+)(out) = Na(+)(out) + 2 H(+)(in). Functionally, na(+)/H(+) antiporter that extrudes sodium in exchange for external protons. The protein is Na(+)/H(+) antiporter NhaA of Haemophilus influenzae (strain PittEE).